The sequence spans 325 residues: Polyamine aminopropyltransferase (325 aa).

One can recognise a PABS domain in the interval 11 to 248 (SSMAEDFAVE…TLWAMAMASD (238 aa)). Q44 is a binding site for S-methyl-5'-thioadenosine. Positions 75 and 99 each coordinate spermidine. Residues E119 and 151-152 (DG) each bind S-methyl-5'-thioadenosine. Residue D169 is the Proton acceptor of the active site. P176 contacts S-methyl-5'-thioadenosine.

The protein belongs to the spermidine/spermine synthase family. As to quaternary structure, homodimer or homotetramer.

Its subcellular location is the cytoplasm. It carries out the reaction S-adenosyl 3-(methylsulfanyl)propylamine + putrescine = S-methyl-5'-thioadenosine + spermidine + H(+). It functions in the pathway amine and polyamine biosynthesis; spermidine biosynthesis; spermidine from putrescine: step 1/1. In terms of biological role, catalyzes the irreversible transfer of a propylamine group from the amino donor S-adenosylmethioninamine (decarboxy-AdoMet) to putrescine (1,4-diaminobutane) to yield spermidine. This chain is Polyamine aminopropyltransferase, found in Nitrosomonas europaea (strain ATCC 19718 / CIP 103999 / KCTC 2705 / NBRC 14298).